Here is a 106-residue protein sequence, read N- to C-terminus: Small ribosomal subunit protein uS10 (106 aa).

The protein belongs to the universal ribosomal protein uS10 family. As to quaternary structure, part of the 30S ribosomal subunit.

Involved in the binding of tRNA to the ribosomes. This Caldicellulosiruptor bescii (strain ATCC BAA-1888 / DSM 6725 / KCTC 15123 / Z-1320) (Anaerocellum thermophilum) protein is Small ribosomal subunit protein uS10.